Consider the following 577-residue polypeptide: MDRAVSQVALENDEREAKNTWRLIFRIAILLLTVVTLATSVASLVYSMGASTPSDLVGIPTRISRAEEKITSALGSNQDVVDRIYKQVALESPLALLNTETTIMNAITSLSYQINGAANNSGWGAPIHDPDFIGGIGKELIVDNASDVTSFYPSAFQEHLNFIPAPTTGSGCTRIPSFDMSATHYCYTHNVILSGCRDHSHSHQYLALGVLRTTATGRIFFSTLRSISLDDTQNRKSCSVSATPLGCDMLCSKVTETEEEDYNSAVPTLMAHGRLGFDGQYHEKDLDVTTLFEDWVANYPGVGGGSFIDGRVWFSVYGGLKPNSPSDTVQEGKYVIYKRYNDTCPDEQDYQIRMAKSSYKPGRFGGKRIQQAILSIKVSTSLGEDPVLTVPPNTVTLMGAEGRILTVGTSHFLYQRGSSYFSPALLYPMTVSNKTATLHSPYTFNAFTRPGSIPCQASARCPNSCVTGVYTDPYPLIFYRNHTLRGVFGTMLDSEQARLNPASAVFDSTSRSRITRVSSSSTKAAYTTSTCFKVVKTNKTYCLSIAEISNTLFGEFRIVPLLVEILKNDGVREARSG.

Residues Met1–Arg22 lie on the Intravirion side of the membrane. The helical transmembrane segment at Leu23–Val45 threads the bilayer. Over Tyr46–Val571 the chain is Virion surface. Residues Asn119 and Asn144 are each glycosylated (N-linked (GlcNAc...) asparagine; by host). The interval Gly124–Tyr152 is important for interaction with fusion/F protein. 3 disulfides stabilise this stretch: Cys172/Cys196, Cys186/Cys247, and Cys238/Cys251. The tract at residues Asn234–Ser239 is involved in neuraminidase activity. N-linked (GlcNAc...) asparagine; by host glycans are attached at residues Asn341 and Asn433. Cystine bridges form between Cys344/Cys461 and Cys455/Cys465. N-linked (GlcNAc...) asparagine; by host glycosylation is found at Asn481 and Asn538. Cys531 and Cys542 are disulfide-bonded.

It belongs to the paramyxoviruses hemagglutinin-neuraminidase family. In terms of assembly, homotetramer; composed of disulfide-linked homodimers. Interacts with F protein trimer. Interacts with host CG-1B; this interaction inhibits viral adsorption and replication rather than internalization.

The protein localises to the virion membrane. Its subcellular location is the host cell membrane. It catalyses the reaction Hydrolysis of alpha-(2-&gt;3)-, alpha-(2-&gt;6)-, alpha-(2-&gt;8)- glycosidic linkages of terminal sialic acid residues in oligosaccharides, glycoproteins, glycolipids, colominic acid and synthetic substrates.. In terms of biological role, mediates the viral entry into the host cell together with fusion/F protein. Attaches the virus to sialic acid-containing cell receptors and thereby initiates infection. Binding of HN protein to the receptor induces a conformational change that allows the F protein to trigger virion/cell membranes fusion. Its function is as follows. Neuraminidase activity ensures the efficient spread of the virus by dissociating the mature virions from the neuraminic acid containing glycoproteins. This Gallus gallus (Chicken) protein is Hemagglutinin-neuraminidase (HN).